A 240-amino-acid polypeptide reads, in one-letter code: Sulfite dehydrogenase subunit B (240 aa).

4Fe-4S ferredoxin-type domains lie at 4-34 (LALVIDLNVCVGCHACVTSCKEWNTSGWAGP), 64-95 (TETVHFPKSCLHCEEPPCVPVCPTGASYKRPD), and 97-126 (GVVLVDYDKCIGCKYCSWACPYGARELDAQ). [4Fe-4S] cluster-binding residues include cysteine 13, cysteine 16, cysteine 19, cysteine 23, cysteine 73, cysteine 76, cysteine 81, cysteine 85, cysteine 106, cysteine 109, cysteine 112, and cysteine 116.

As to quaternary structure, forms a heterotrimeric membrane-bound complex composed of a catalytic heterodimer (SoeAB) and a membrane anchor protein (SoeC). The cofactor is [4Fe-4S] cluster.

The protein localises to the cell inner membrane. Functionally, part of the SoeABC complex that catalyzes the oxidation of sulfite to sulfate. SoeB is probably the electron transfer subunit. This chain is Sulfite dehydrogenase subunit B, found in Allochromatium vinosum (strain ATCC 17899 / DSM 180 / NBRC 103801 / NCIMB 10441 / D) (Chromatium vinosum).